The chain runs to 145 residues: D-aminoacyl-tRNA deacylase (145 aa).

The Gly-cisPro motif, important for rejection of L-amino acids signature appears at 137–138 (GP).

It belongs to the DTD family. In terms of assembly, homodimer.

The protein localises to the cytoplasm. It catalyses the reaction glycyl-tRNA(Ala) + H2O = tRNA(Ala) + glycine + H(+). The enzyme catalyses a D-aminoacyl-tRNA + H2O = a tRNA + a D-alpha-amino acid + H(+). Functionally, an aminoacyl-tRNA editing enzyme that deacylates mischarged D-aminoacyl-tRNAs. Also deacylates mischarged glycyl-tRNA(Ala), protecting cells against glycine mischarging by AlaRS. Acts via tRNA-based rather than protein-based catalysis; rejects L-amino acids rather than detecting D-amino acids in the active site. By recycling D-aminoacyl-tRNA to D-amino acids and free tRNA molecules, this enzyme counteracts the toxicity associated with the formation of D-aminoacyl-tRNA entities in vivo and helps enforce protein L-homochirality. In Shewanella pealeana (strain ATCC 700345 / ANG-SQ1), this protein is D-aminoacyl-tRNA deacylase.